A 314-amino-acid chain; its full sequence is Acetyl-coenzyme A carboxylase carboxyl transferase subunit beta (314 aa).

In terms of domain architecture, CoA carboxyltransferase N-terminal spans 24-293; the sequence is LWIKCPDTGQ…IDAAPEPSPA (270 aa). The interval 283 to 314 is disordered; that stretch reads EIDAAPEPSPAAEEPAEPMPAPEAAAPSAPPA. Low complexity-rich tracts occupy residues 284-295 and 304-314; these read IDAAPEPSPAAE and PEAAAPSAPPA.

This sequence belongs to the AccD/PCCB family. In terms of assembly, acetyl-CoA carboxylase is a heterohexamer composed of biotin carboxyl carrier protein (AccB), biotin carboxylase (AccC) and two subunits each of ACCase subunit alpha (AccA) and ACCase subunit beta (AccD).

The protein localises to the cytoplasm. It carries out the reaction N(6)-carboxybiotinyl-L-lysyl-[protein] + acetyl-CoA = N(6)-biotinyl-L-lysyl-[protein] + malonyl-CoA. The protein operates within lipid metabolism; malonyl-CoA biosynthesis; malonyl-CoA from acetyl-CoA: step 1/1. Functionally, component of the acetyl coenzyme A carboxylase (ACC) complex. Biotin carboxylase (BC) catalyzes the carboxylation of biotin on its carrier protein (BCCP) and then the CO(2) group is transferred by the transcarboxylase to acetyl-CoA to form malonyl-CoA. This Nitrobacter hamburgensis (strain DSM 10229 / NCIMB 13809 / X14) protein is Acetyl-coenzyme A carboxylase carboxyl transferase subunit beta.